The sequence spans 1015 residues: DExH-box ATP-dependent RNA helicase DExH8 (1015 aa).

The region spanning Ile-36–Val-197 is the Helicase ATP-binding domain. ATP is bound at residue Gly-49–Ser-56. Residues Asp-144–His-147 carry the DEVH box motif. In terms of domain architecture, Helicase C-terminal spans Leu-254–His-419. 2 C3H1-type zinc fingers span residues Tyr-727–Leu-753 and Gln-754–Arg-782.

Belongs to the DExH box helicase family.

The catalysed reaction is ATP + H2O = ADP + phosphate + H(+). This Arabidopsis thaliana (Mouse-ear cress) protein is DExH-box ATP-dependent RNA helicase DExH8.